The following is a 259-amino-acid chain: uncharacterized protein (259 aa).

It to M.thermoautotrophicum MTH738.

This is an uncharacterized protein from Methanocaldococcus jannaschii (strain ATCC 43067 / DSM 2661 / JAL-1 / JCM 10045 / NBRC 100440) (Methanococcus jannaschii).